Here is a 253-residue protein sequence, read N- to C-terminus: Ribosome-inactivating protein saporin-7 (253 aa).

The active site involves Glu-176.

The protein belongs to the ribosome-inactivating protein family. Type 1 RIP subfamily.

The catalysed reaction is Endohydrolysis of the N-glycosidic bond at one specific adenosine on the 28S rRNA.. Its function is as follows. Ribosome-inactivating protein of type 1, inhibits protein synthesis in animal cells. The protein is Ribosome-inactivating protein saporin-7 (SAP7) of Saponaria officinalis (Common soapwort).